Reading from the N-terminus, the 290-residue chain is Bifunctional protein FolD (290 aa).

NADP(+) contacts are provided by residues 165–167 (GRG), S194, and I235.

Belongs to the tetrahydrofolate dehydrogenase/cyclohydrolase family. Homodimer.

The enzyme catalyses (6R)-5,10-methylene-5,6,7,8-tetrahydrofolate + NADP(+) = (6R)-5,10-methenyltetrahydrofolate + NADPH. It catalyses the reaction (6R)-5,10-methenyltetrahydrofolate + H2O = (6R)-10-formyltetrahydrofolate + H(+). The protein operates within one-carbon metabolism; tetrahydrofolate interconversion. In terms of biological role, catalyzes the oxidation of 5,10-methylenetetrahydrofolate to 5,10-methenyltetrahydrofolate and then the hydrolysis of 5,10-methenyltetrahydrofolate to 10-formyltetrahydrofolate. The sequence is that of Bifunctional protein FolD from Syntrophotalea carbinolica (strain DSM 2380 / NBRC 103641 / GraBd1) (Pelobacter carbinolicus).